Reading from the N-terminus, the 669-residue chain is Hypoxia-inducible factor 3-alpha (669 aa).

The disordered stretch occupies residues 1–27; the sequence is MALGLQRARSTTELRKEKSRDAARSRR. Residues 10 to 27 are compositionally biased toward basic and acidic residues; the sequence is STTELRKEKSRDAARSRR. The 54-residue stretch at 14–67 folds into the bHLH domain; that stretch reads LRKEKSRDAARSRRSQETEVLYQLAHTLPFARGVSAHLDKASIMRLTISYLRMH. A nuclear localization signal region spans residues 77–100; sequence QVGAGGEPLDACYLKALEGFVMVL. 2 consecutive PAS domains span residues 82–154 and 227–297; these read GEPL…LSRR and PHPG…LSKG. A nuclear export signal region spans residues 230–274; sequence GSLEPPLGRGAFLSRHSLDMKFTYCDDRIAEVAGYSPDDLIGCSA. A disordered region spans residues 354–389; the sequence is EQTEQHSRRPIQRGAPSQKDTPNPGDSLDTPGPRIL. Positions 414–418 match the LRRLL motif; it reads LRRLL. Over residues 430–444 the composition is skewed to polar residues; sequence TPSTPLATRHPQSPL. Positions 430–451 are disordered; that stretch reads TPSTPLATRHPQSPLSADLPDE. An ODD region spans residues 452-581; that stretch reads LPVGTENVHR…TLAQSSEDED (130 aa). An NTAD region spans residues 454–506; it reads VGTENVHRLFTSGKDTEAVETDLDIAQDADALDLEMLAPYISMDDDFQLNASE. Lys-467 is covalently cross-linked (Glycyl lysine isopeptide (Lys-Gly) (interchain with G-Cter in ubiquitin)). Residues 490–497 carry the LAPYISMD motif; it reads LAPYISMD. Pro-492 carries the 4-hydroxyproline modification. Disordered regions lie at residues 523–600 and 619–669; these read RARS…SPEH and APGS…AQAD. Composition is skewed to low complexity over residues 530 to 541 and 550 to 564; these read LSPPALEPSLLP and SCSSPSRGDPSASSP. Lys-570 participates in a covalent cross-link: Glycyl lysine isopeptide (Lys-Gly) (interchain with G-Cter in ubiquitin). Over residues 629 to 646 the composition is skewed to low complexity; that stretch reads PLLNLNEPLGLGPSLLSP.

As to quaternary structure, isoform 2 interacts (via ODD domain) with VHL (via beta domain). Isoform 4 interacts with HIF1A; the interaction inhibits the binding of HIF1A to hypoxia-responsive element (HRE) and HIF1A/ARNT-dependent transcriptional activation. Isoform 4 interacts with ARNT; the interaction occurs in a HIF1A- and DNA-binding-independent manner and does not induce HIF1A/ARNT-dependent transcriptional activation. Isoform 4 interacts with EPAS1. Interacts with BAD, BCL2L2 and MCL1. In terms of processing, in normoxia, hydroxylated on Pro-492 in the oxygen-dependent degradation domain (ODD) by prolyl hydroxylase(s) (PHD). The hydroxylated proline promotes interaction with VHL, initiating rapid ubiquitination and subsequent proteasomal degradation. Ubiquitinated; ubiquitination occurs in a VHL- and oxygen-dependent pathway and subsequently targeted for proteasomal degradation. As to expression, expressed in vascular cells (at protein level). Expressed in kidney. Expressed in lung epithelial cells. Expressed in endothelial cells (venous and arterial cells from umbilical cord and aortic endothelial cells) and in vascular smooth muscle cells (aorta). Strongly expressed in the heart, placenta, and skeletal muscle, whereas a weak expression profile was found in the lung, liver, and kidney. Expressed weakly in cell renal cell carcinoma (CC-RCC) compared to normal renal cells. Expression is down-regulated in numerous kidney tumor cells compared to non tumor kidney tissues. Isoform 2 is expressed in heart, placenta, lung, liver, skeletal muscle and pancreas and in numerous cancer cell lines. Isoform 3 and isoform 4 are weakly expressed in heart, placenta, lung, liver, skeletal muscle and pancreas. Isoform 4 is expressed in fetal tissues, such as heart, brain, thymus, lung, liver, skeletal kidney and spleen. Isoform 3 is weakly expressed in fetal tissues, such as liver and kidney.

It localises to the nucleus. The protein localises to the cytoplasm. Its subcellular location is the nucleus speckle. The protein resides in the mitochondrion. Functionally, acts as a transcriptional regulator in adaptive response to low oxygen tension. Acts as a regulator of hypoxia-inducible gene expression. Functions as an inhibitor of angiogenesis in hypoxic cells of the cornea. Plays a role in the development of the cardiorespiratory system. May also be involved in apoptosis. Its function is as follows. Attenuates the ability of transcription factor HIF1A to bind to hypoxia-responsive elements (HRE) located within the enhancer/promoter of hypoxia-inducible target genes and hence inhibits HRE-driven transcriptional activation. Also inhibits hypoxia-inducible ARNT-mediated gene expression. In terms of biological role, attenuates the ability of transcription factor HIF1A to bind to hypoxia-responsive elements (HRE) located within the enhancer/promoter of hypoxia-inducible target genes and hence inhibits HRE-driven transcriptional activation. Attenuates the ability of transcription factor HIF1A and EPAS1/HIF2A to bind to hypoxia-responsive elements (HRE) located within the enhancer/promoter of hypoxia-inducible target genes and hence inhibits HRE-driven transcriptional activation. May act as a tumor suppressor and inhibits malignant cell transformation. The chain is Hypoxia-inducible factor 3-alpha from Homo sapiens (Human).